We begin with the raw amino-acid sequence, 266 residues long: Undecaprenyl-diphosphatase (266 aa).

7 consecutive transmembrane segments (helical) span residues 41-61 (NLAFTIVVHVATVFSTLVVLW), 80-100 (TKYVINILISMIPIGIVGVFF), 107-127 (IFGSGLLVVGCMLLLTAALLA), 140-160 (ISMKDAFIIGLAQACAVMPGL), 180-200 (LAQFSFLMVIPPILGEALLDV), 213-233 (IPALSLAVGFMAAFVSGCVAC), and 245-265 (LIYFAIYCAIAGLVTIACTLL).

The protein belongs to the UppP family.

It localises to the cell inner membrane. The catalysed reaction is di-trans,octa-cis-undecaprenyl diphosphate + H2O = di-trans,octa-cis-undecaprenyl phosphate + phosphate + H(+). Functionally, catalyzes the dephosphorylation of undecaprenyl diphosphate (UPP). Confers resistance to bacitracin. This chain is Undecaprenyl-diphosphatase, found in Parabacteroides distasonis (strain ATCC 8503 / DSM 20701 / CIP 104284 / JCM 5825 / NCTC 11152).